We begin with the raw amino-acid sequence, 330 residues long: tRNA U34 carboxymethyltransferase (330 aa).

Residues Lys-91, Trp-105, Lys-110, Gly-130, 152-154 (DPS), 181-182 (IE), Met-196, Tyr-200, and Arg-315 contribute to the carboxy-S-adenosyl-L-methionine site.

The protein belongs to the class I-like SAM-binding methyltransferase superfamily. CmoB family. Homotetramer.

It catalyses the reaction carboxy-S-adenosyl-L-methionine + 5-hydroxyuridine(34) in tRNA = 5-carboxymethoxyuridine(34) in tRNA + S-adenosyl-L-homocysteine + H(+). Functionally, catalyzes carboxymethyl transfer from carboxy-S-adenosyl-L-methionine (Cx-SAM) to 5-hydroxyuridine (ho5U) to form 5-carboxymethoxyuridine (cmo5U) at position 34 in tRNAs. In Shewanella halifaxensis (strain HAW-EB4), this protein is tRNA U34 carboxymethyltransferase.